The chain runs to 350 residues: tRNA U34 carboxymethyltransferase (350 aa).

Carboxy-S-adenosyl-L-methionine is bound by residues Lys-101, Trp-125, Lys-130, Gly-150, 172 to 174 (DPS), 208 to 209 (LE), Met-224, Tyr-228, and Arg-343.

The protein belongs to the class I-like SAM-binding methyltransferase superfamily. CmoB family. As to quaternary structure, homotetramer.

The catalysed reaction is carboxy-S-adenosyl-L-methionine + 5-hydroxyuridine(34) in tRNA = 5-carboxymethoxyuridine(34) in tRNA + S-adenosyl-L-homocysteine + H(+). In terms of biological role, catalyzes carboxymethyl transfer from carboxy-S-adenosyl-L-methionine (Cx-SAM) to 5-hydroxyuridine (ho5U) to form 5-carboxymethoxyuridine (cmo5U) at position 34 in tRNAs. The polypeptide is tRNA U34 carboxymethyltransferase (Psychrobacter arcticus (strain DSM 17307 / VKM B-2377 / 273-4)).